We begin with the raw amino-acid sequence, 78 residues long: Small ribosomal subunit protein bS18 (78 aa).

This sequence belongs to the bacterial ribosomal protein bS18 family. As to quaternary structure, part of the 30S ribosomal subunit. Forms a tight heterodimer with protein bS6.

Functionally, binds as a heterodimer with protein bS6 to the central domain of the 16S rRNA, where it helps stabilize the platform of the 30S subunit. This is Small ribosomal subunit protein bS18 from Limosilactobacillus fermentum (strain NBRC 3956 / LMG 18251) (Lactobacillus fermentum).